We begin with the raw amino-acid sequence, 95 residues long: Co-chaperonin GroES (95 aa).

The protein belongs to the GroES chaperonin family. Heptamer of 7 subunits arranged in a ring. Interacts with the chaperonin GroEL.

It localises to the cytoplasm. Together with the chaperonin GroEL, plays an essential role in assisting protein folding. The GroEL-GroES system forms a nano-cage that allows encapsulation of the non-native substrate proteins and provides a physical environment optimized to promote and accelerate protein folding. GroES binds to the apical surface of the GroEL ring, thereby capping the opening of the GroEL channel. In Geobacter metallireducens (strain ATCC 53774 / DSM 7210 / GS-15), this protein is Co-chaperonin GroES.